The sequence spans 342 residues: Lipase B (342 aa).

The first 18 residues, 1 to 18, serve as a signal peptide directing secretion; it reads MKLLSLTGVAGVLATCVA. Residues 19–25 constitute a propeptide that is removed on maturation; the sequence is ATPLVKR. Residues Cys47 and Cys89 are joined by a disulfide bond. Asn99 carries N-linked (GlcNAc...) asparagine glycosylation. Active-site residues include Ser130, Asp212, and His249. Cystine bridges form between Cys241–Cys283 and Cys318–Cys336.

It carries out the reaction a triacylglycerol + H2O = a diacylglycerol + a fatty acid + H(+). In terms of biological role, hydrolysis of triglycerides. Is very stereospecific both in hydrolysis and in organic synthesis and has a potentially important application in glucolipid synthesis. The chain is Lipase B from Pseudozyma antarctica (Yeast).